Reading from the N-terminus, the 754-residue chain is tRNA 5-methylaminomethyl-2-thiouridine biosynthesis bifunctional protein MnmC (754 aa).

Residues Met-1–Ser-320 are tRNA (mnm(5)s(2)U34)-methyltransferase. Residues Ile-324–Cys-754 form an FAD-dependent cmnm(5)s(2)U34 oxidoreductase region.

The protein in the N-terminal section; belongs to the methyltransferase superfamily. tRNA (mnm(5)s(2)U34)-methyltransferase family. This sequence in the C-terminal section; belongs to the DAO family. Requires FAD as cofactor.

It localises to the cytoplasm. The enzyme catalyses 5-aminomethyl-2-thiouridine(34) in tRNA + S-adenosyl-L-methionine = 5-methylaminomethyl-2-thiouridine(34) in tRNA + S-adenosyl-L-homocysteine + H(+). Functionally, catalyzes the last two steps in the biosynthesis of 5-methylaminomethyl-2-thiouridine (mnm(5)s(2)U) at the wobble position (U34) in tRNA. Catalyzes the FAD-dependent demodification of cmnm(5)s(2)U34 to nm(5)s(2)U34, followed by the transfer of a methyl group from S-adenosyl-L-methionine to nm(5)s(2)U34, to form mnm(5)s(2)U34. This is tRNA 5-methylaminomethyl-2-thiouridine biosynthesis bifunctional protein MnmC from Shewanella denitrificans (strain OS217 / ATCC BAA-1090 / DSM 15013).